The primary structure comprises 128 residues: Holo-[acyl-carrier-protein] synthase (128 aa).

Positions 8 and 60 each coordinate Mg(2+).

It belongs to the P-Pant transferase superfamily. AcpS family. Mg(2+) is required as a cofactor.

The protein localises to the cytoplasm. It catalyses the reaction apo-[ACP] + CoA = holo-[ACP] + adenosine 3',5'-bisphosphate + H(+). Transfers the 4'-phosphopantetheine moiety from coenzyme A to a Ser of acyl-carrier-protein. The protein is Holo-[acyl-carrier-protein] synthase of Anaeromyxobacter sp. (strain K).